The sequence spans 607 residues: UvrABC system protein C (607 aa).

One can recognise a GIY-YIG domain in the interval Cys11 to Val89. The 36-residue stretch at Ser201 to Val236 folds into the UVR domain.

The protein belongs to the UvrC family. As to quaternary structure, interacts with UvrB in an incision complex.

The protein localises to the cytoplasm. Its function is as follows. The UvrABC repair system catalyzes the recognition and processing of DNA lesions. UvrC both incises the 5' and 3' sides of the lesion. The N-terminal half is responsible for the 3' incision and the C-terminal half is responsible for the 5' incision. This Tropheryma whipplei (strain TW08/27) (Whipple's bacillus) protein is UvrABC system protein C.